The chain runs to 554 residues: Protein NODULATION SIGNALING PATHWAY 1 (554 aa).

The segment at 76–165 (TTSTTSLEPN…NSNNGNNKDG (90 aa)) is disordered. The span at 82–91 (LEPNSFNNIP) shows a compositional bias: polar residues. The span at 95-107 (LPKKRNAEDELSL) shows a compositional bias: basic and acidic residues. Positions 150–162 (AKANGSNSNNGNN) are enriched in low complexity. Residues 159–548 (NGNNKDGRWA…QPVSFCSLWK (390 aa)) enclose the GRAS domain. A leucine repeat I (LRI) region spans residues 166-227 (RWAEQLLNPC…HHLSSSSSST (62 aa)). The tract at residues 246-315 (LLKFYEFSPW…GGPPPLVRLT (70 aa)) is VHIID. The VHIID motif lies at 281 to 285 (LHILD). Positions 331–373 (TPFSIGPCGDTFSSGLLGYAQSLNVNLQIKKLDNHPLQTLNAK) are leucine repeat II (LRII). The tract at residues 383-468 (LIVCAQFRLH…RDSDERKMME (86 aa)) is PFYRE. The SAW stretch occupies residues 471–548 (AAKALTNQRE…QPVSFCSLWK (78 aa)).

The protein belongs to the GRAS family. As to expression, expressed in epidermal and cortical root cells.

The protein localises to the nucleus. Transcriptional regulator essential for Nod-factor-induced gene expression. Acts downstream of calcium spiking. May be a target of DMI3, a calcium/calmodulin-dependent protein kinase (CCaMK). Is essential for Nod factor-elicited expression of ERN1. Transcription factor involved in the control of strigolactone biosynthesis in roots through the activation of the beta-carotene isomerase D27, which participates in a pathway leading to biosynthesis of strigolactones. The protein is Protein NODULATION SIGNALING PATHWAY 1 of Medicago truncatula (Barrel medic).